The chain runs to 561 residues: Arginine--tRNA ligase (561 aa).

The 'HIGH' region motif lies at alanine 135–asparagine 145.

This sequence belongs to the class-I aminoacyl-tRNA synthetase family. As to quaternary structure, monomer.

The protein localises to the cytoplasm. It catalyses the reaction tRNA(Arg) + L-arginine + ATP = L-arginyl-tRNA(Arg) + AMP + diphosphate. This chain is Arginine--tRNA ligase, found in Desulfitobacterium hafniense (strain DSM 10664 / DCB-2).